The following is a 368-amino-acid chain: Agmatine deiminase (368 aa).

Cys-357 acts as the Amidino-cysteine intermediate in catalysis.

Belongs to the agmatine deiminase family. As to quaternary structure, homodimer.

The catalysed reaction is agmatine + H2O = N-carbamoylputrescine + NH4(+). The protein operates within amine and polyamine biosynthesis; putrescine biosynthesis via agmatine pathway; N-carbamoylputrescine from agmatine: step 1/1. Functionally, mediates the hydrolysis of agmatine into N-carbamoylputrescine in the arginine decarboxylase (ADC) pathway of putrescine biosynthesis, a basic polyamine. In Pseudomonas savastanoi pv. phaseolicola (strain 1448A / Race 6) (Pseudomonas syringae pv. phaseolicola (strain 1448A / Race 6)), this protein is Agmatine deiminase.